The following is a 625-amino-acid chain: Clathrin interactor 1 (625 aa).

Residues asparagine 16–arginine 149 form the ENTH domain. Arginine 29 contributes to the a 1,2-diacyl-sn-glycero-3-phospho-(1D-myo-inositol-4,5-bisphosphate) binding site. The tract at residues phenylalanine 52 to tyrosine 54 is interaction with VTI1B. Arginine 67 is an a 1,2-diacyl-sn-glycero-3-phospho-(1D-myo-inositol-4,5-bisphosphate) binding site. 2 interaction with VTI1B regions span residues serine 94–arginine 96 and aspartate 142–lysine 153. Serine 163, serine 166, serine 173, serine 205, serine 210, serine 227, serine 245, and serine 299 each carry phosphoserine. The interval phenylalanine 219–aspartate 331 is disordered. The segment covering lysine 222–lysine 239 has biased composition (basic and acidic residues). At threonine 308 the chain carries Phosphothreonine. A compositionally biased stretch (low complexity) spans threonine 308–serine 323. The residue at position 312 (serine 312) is a Phosphoserine. An interaction with AP1G1, AP1G2 and GGA2 region spans residues serine 340 to serine 352. Positions glycine 368–glutamine 380 are interaction with AP1G1 and AP1G2. Serine 624 is modified (phosphoserine).

The protein belongs to the epsin family. As to quaternary structure, binds clathrin heavy chain and AP-2. Interacts with VTI1B. Interacts with GGA2 (via GAE domain). Interacts with AP1G1 (via GAE domain). Interacts with AP1G2 (via GAE domain). In terms of tissue distribution, ubiquitously expressed at low to intermediate levels.

The protein resides in the cytoplasm. It is found in the perinuclear region. The protein localises to the membrane. It localises to the cytoplasmic vesicle. Its subcellular location is the clathrin-coated vesicle. Its function is as follows. Binds to membranes enriched in phosphatidylinositol 4,5-bisphosphate (PtdIns(4,5)P2). May have a role in transport via clathrin-coated vesicles from the trans-Golgi network to endosomes. Stimulates clathrin assembly. The chain is Clathrin interactor 1 (CLINT1) from Homo sapiens (Human).